We begin with the raw amino-acid sequence, 60 residues long: Large ribosomal subunit protein bL32 (60 aa).

The tract at residues 1-44 is disordered; sequence MAVQQNKKSRSARDMRRSHDALEASTLSVEKTTGEVHLRHHVSP. The span at 11-22 shows a compositional bias: basic and acidic residues; that stretch reads SARDMRRSHDAL.

This sequence belongs to the bacterial ribosomal protein bL32 family.

The sequence is that of Large ribosomal subunit protein bL32 from Pseudomonas fluorescens (strain SBW25).